The chain runs to 274 residues: Nickel/cobalt efflux system RcnA (274 aa).

Residues M1–N12 are Periplasmic-facing. The helical transmembrane segment at G13–H33 threads the bilayer. Residues S34 to Q51 lie on the Cytoplasmic side of the membrane. Residues A52 to L72 form a helical membrane-spanning segment. Residues G73–S85 are Periplasmic-facing. Residues V86 to F106 form a helical membrane-spanning segment. At W107–Q174 the chain is on the cytoplasmic side. The segment covering H122–P141 has biased composition (basic and acidic residues). The interval H122 to G143 is disordered. Residues I175–L195 form a helical membrane-spanning segment. Over I196–M209 the chain is Periplasmic. The helical transmembrane segment at V210–I230 threads the bilayer. The Cytoplasmic portion of the chain corresponds to S231 to Y251. A helical membrane pass occupies residues F252–I272. The Periplasmic portion of the chain corresponds to M273–Q274.

It belongs to the NiCoT transporter (TC 2.A.52) family. RcnA subfamily.

It localises to the cell inner membrane. In terms of biological role, efflux system for nickel and cobalt. This chain is Nickel/cobalt efflux system RcnA (rcnA), found in Salmonella paratyphi A (strain ATCC 9150 / SARB42).